The primary structure comprises 418 residues: Secernin-3 (418 aa).

Residues Met-1–Ser-5 constitute a propeptide that is removed on maturation. Cys-6 is an active-site residue. Glyoxylic acid (Cys); alternate is present on Cys-6. At Cys-6 the chain carries Pyruvic acid (Cys); alternate.

Belongs to the peptidase C69 family. Secernin subfamily.

Its function is as follows. Plays a role in thermal nociception. This chain is Secernin-3 (Scrn3), found in Mus musculus (Mouse).